Consider the following 480-residue polypeptide: Bindin (480 aa).

A signal peptide spans 1–20 (MDSQVLPLILLIIVFAASSA). The propeptide occupies 21 to 247 (HGHFPHRTNQ…GEMRAERQRR (227 aa)). The segment at 161 to 211 (AEMRHRRSAKDDDVNKRASPRKGSSPAGKKVQIMEQDAGKGDAHNEKEVVK) is disordered. Positions 197–211 (DAGKGDAHNEKEVVK) are enriched in basic and acidic residues. Residues 377-385 (LRHLRHHSN) form a fucose-binding domain region. Residues 431 to 451 (GAGAVAGAAMAAGMPPYPGGA) traverse the membrane as a helical segment. The segment at 452 to 480 (QGGMRVGGQPQNPMGGNAYNPMTGYRQQG) is disordered.

It belongs to the bindin family.

The protein localises to the cytoplasmic vesicle. It is found in the secretory vesicle. It localises to the acrosome membrane. Species-specific sea urchin sperm protein required for adhesion of sperm to the egg surface during fertilization. Bindin coats the acrosomal process after it is externalized by the acrosome reaction. It binds to sulfated, fucose-containing polysaccharides on the vitelline layer receptor proteoglycans which cover the egg plasma membrane. In Arbacia punctulata (Punctuate sea urchin), this protein is Bindin.